We begin with the raw amino-acid sequence, 225 residues long: ATP-dependent Clp protease proteolytic subunit (225 aa).

The Nucleophile role is filled by Ser-126. The active site involves His-151.

This sequence belongs to the peptidase S14 family. As to quaternary structure, fourteen ClpP subunits assemble into 2 heptameric rings which stack back to back to give a disk-like structure with a central cavity, resembling the structure of eukaryotic proteasomes.

The protein localises to the cytoplasm. It catalyses the reaction Hydrolysis of proteins to small peptides in the presence of ATP and magnesium. alpha-casein is the usual test substrate. In the absence of ATP, only oligopeptides shorter than five residues are hydrolyzed (such as succinyl-Leu-Tyr-|-NHMec, and Leu-Tyr-Leu-|-Tyr-Trp, in which cleavage of the -Tyr-|-Leu- and -Tyr-|-Trp bonds also occurs).. Functionally, cleaves peptides in various proteins in a process that requires ATP hydrolysis. Has a chymotrypsin-like activity. Plays a major role in the degradation of misfolded proteins. The protein is ATP-dependent Clp protease proteolytic subunit of Psychrobacter arcticus (strain DSM 17307 / VKM B-2377 / 273-4).